Reading from the N-terminus, the 415-residue chain is Esterase FrsA (415 aa).

The protein belongs to the FrsA family.

The enzyme catalyses a carboxylic ester + H2O = an alcohol + a carboxylate + H(+). Catalyzes the hydrolysis of esters. The protein is Esterase FrsA of Vibrio parahaemolyticus serotype O3:K6 (strain RIMD 2210633).